The following is a 233-amino-acid chain: H-2 class II histocompatibility antigen, A-S alpha chain (233 aa).

The segment at 1-88 is alpha-1; it reads EDDIEADHVG…KRSNSTPATN (88 aa). Residues 1-195 lie on the Extracellular side of the membrane; that stretch reads EDDIEADHVG…IPAPMSELTE (195 aa). Residues 89–182 are alpha-2; sequence EAPQATVFPK…GLEEPVLKHW (94 aa). The region spanning 91–183 is the Ig-like C1-type domain; that stretch reads PQATVFPKSP…LEEPVLKHWE (93 aa). Cysteine 111 and cysteine 167 are disulfide-bonded. N-linked (GlcNAc...) asparagine glycosylation occurs at asparagine 122. Positions 183 to 195 are connecting peptide; it reads EPEIPAPMSELTE. The chain crosses the membrane as a helical span at residues 196–221; the sequence is TVVCALGLSVGLVGIVVGTIFIIQGL. The Cytoplasmic portion of the chain corresponds to 222–233; it reads RSGGTSRHPGPL.

Belongs to the MHC class II family.

The protein resides in the membrane. The sequence is that of H-2 class II histocompatibility antigen, A-S alpha chain (H2-Aa) from Mus musculus (Mouse).